We begin with the raw amino-acid sequence, 970 residues long: uncharacterized protein (970 aa).

A helical membrane pass occupies residues 12-32; sequence VIFFSVFFVIFFLFIESSVGF.

This sequence to E.coli YtfN.

The protein resides in the membrane. This is an uncharacterized protein from Buchnera aphidicola subsp. Acyrthosiphon pisum (strain APS) (Acyrthosiphon pisum symbiotic bacterium).